Reading from the N-terminus, the 417-residue chain is RH-like protein (417 aa).

11 consecutive transmembrane segments (helical) span residues 12–32 (CLPLWALTLEAALILLFFFFT), 44–64 (LVASYQVCQDLTVMAVLGLGF), 77–97 (VAFNLFLLALGVQWAILLDGF), 125–145 (ISMNAVLGKVNLVQLVVMELV), 172–192 (IHVFAAYFGLTVAWCLPKPLP), 203–223 (TSPSLFAMLGTLFLWMFWPTF), 238–258 (VFSTYYALAVSAVTAISVSSL), 265–285 (INMTYMHNAALAGGVALSASC), 287–307 (VIHSPWIAMVLGLVAGLISIG), 331–351 (TFGLPALLGEITYIVLMALRV), and 358–378 (MIGFQVLLSTGTLSLAMAMSI).

This sequence belongs to the ammonium transporter (TC 2.A.49) family. Rh subfamily.

The protein localises to the membrane. May be part of an oligomeric complex which is likely to have a transport or channel function in the erythrocyte membrane. This is RH-like protein from Macaca mulatta (Rhesus macaque).